Here is a 689-residue protein sequence, read N- to C-terminus: Zinc finger protein 185 (689 aa).

Disordered regions lie at residues 1 to 253 (MSIS…GRTK) and 298 to 534 (APDV…SCTS). The segment covering 35–52 (LKGDKSWITKQDESEGRT) has biased composition (basic and acidic residues). Phosphoserine is present on Ser-66. Polar residues predominate over residues 95-114 (IDSSSQPQQQFPKANGTPKS). Ser-153 bears the Phosphoserine mark. The span at 157–166 (DTEEEEEEEV) shows a compositional bias: acidic residues. A Phosphoserine modification is found at Pro-206. Composition is skewed to basic and acidic residues over residues 217 to 232 (KRVEVVEEDGPSEKSQ) and 310 to 331 (NKDKEAPCSRELQRDLAGEEAF). The span at 338–349 (AARSSAQLSDGN) shows a compositional bias: polar residues. 2 stretches are compositionally biased toward low complexity: residues 373-382 (SSSATSVSAV) and 434-444 (DPAVPAQQPAD). Thr-447 is modified (phosphothreonine). The span at 448–458 (PERQSSPSGSE) shows a compositional bias: polar residues. Ser-453 and Ser-465 each carry phosphoserine. Residues 504–524 (PTQQPADPSTPEQQNSPSGSE) show a composition bias toward polar residues. The LIM zinc-binding domain maps to 627–689 (GICTYCNREI…HCGKCYEKLF (63 aa)).

In terms of tissue distribution, expressed in placenta, pancreas and kidney. Also expressed in prostate, testis, ovary and blood.

The protein resides in the cytoplasm. Its subcellular location is the cytoskeleton. It localises to the cell junction. It is found in the focal adhesion. In terms of biological role, may be involved in the regulation of cellular proliferation and/or differentiation. In Homo sapiens (Human), this protein is Zinc finger protein 185 (ZNF185).